The sequence spans 126 residues: Aspartate 1-decarboxylase (126 aa).

The active-site Schiff-base intermediate with substrate; via pyruvic acid is Ser25. Ser25 is modified (pyruvic acid (Ser)). Thr57 is a binding site for substrate. The Proton donor role is filled by Tyr58. Residue 73–75 (GGA) participates in substrate binding.

Belongs to the PanD family. Heterooctamer of four alpha and four beta subunits. Pyruvate is required as a cofactor. In terms of processing, is synthesized initially as an inactive proenzyme, which is activated by self-cleavage at a specific serine bond to produce a beta-subunit with a hydroxyl group at its C-terminus and an alpha-subunit with a pyruvoyl group at its N-terminus.

The protein localises to the cytoplasm. The catalysed reaction is L-aspartate + H(+) = beta-alanine + CO2. It participates in cofactor biosynthesis; (R)-pantothenate biosynthesis; beta-alanine from L-aspartate: step 1/1. Its function is as follows. Catalyzes the pyruvoyl-dependent decarboxylation of aspartate to produce beta-alanine. The sequence is that of Aspartate 1-decarboxylase from Xylella fastidiosa (strain M12).